Consider the following 420-residue polypeptide: L-rhamnose isomerase (420 aa).

Mn(2+) contacts are provided by His262, Asp294, and Asp296.

It belongs to the rhamnose isomerase family. As to quaternary structure, homotetramer. Mn(2+) serves as cofactor.

It localises to the cytoplasm. It carries out the reaction L-rhamnopyranose = L-rhamnulose. It participates in carbohydrate degradation; L-rhamnose degradation; glycerone phosphate from L-rhamnose: step 1/3. Catalyzes the interconversion of L-rhamnose and L-rhamnulose. This is L-rhamnose isomerase from Pectobacterium carotovorum subsp. carotovorum (strain PC1).